A 286-amino-acid chain; its full sequence is MNDIDTITNAWGRWKTAQYGTTCWFTESTQYGRNKDTRSYMQHQTNVSAPKDLVYSNFVQQDGGSTLLGQYDMINEGSQVIELAVNLQQGLVDTFTWSVTEQLKVGVEVKVKANIPLVGGAEITSTVELSLSSTQGASTSKSSNYGASTKVLISPHSHGWGEVALSFTELRTQWVGNVGLQGYVAIWFNNKVALNNDGDYHYLWFIPVEQVFWECVQHNIVNTSGYVVQGNGVLAQATGTFHSSVGLNLKTIAHERPYPETSEAVRTFYNYASLVPDLETRVRSAE.

Positions 267-286 (TFYNYASLVPDLETRVRSAE) are excised as a propeptide.

This sequence belongs to the aerolysin family.

It is found in the secreted. Cytotoxin is thought to form hydrophilic pores in cell membranes. This chain is Cytotoxin (ctx), found in Pseudomonas aeruginosa.